A 193-amino-acid chain; its full sequence is Probable DNA-directed RNA polymerase subunit delta (193 aa).

An HTH HARE-type domain is found at 14–81; that stretch reads LALVEIATAI…GNNEWGLRAW (68 aa). Composition is skewed to acidic residues over residues 119 to 174 and 182 to 193; these read DDDV…DDNL and DLDDLSDGDIEK. The tract at residues 119-193 is disordered; sequence DDDVIDYNDD…DDLSDGDIEK (75 aa).

It belongs to the RpoE family. As to quaternary structure, RNAP is composed of a core of 2 alpha, a beta and a beta' subunits. The core is associated with a delta subunit and one of several sigma factors.

Participates in both the initiation and recycling phases of transcription. In the presence of the delta subunit, RNAP displays an increased specificity of transcription, a decreased affinity for nucleic acids, and an increased efficiency of RNA synthesis because of enhanced recycling. The protein is Probable DNA-directed RNA polymerase subunit delta of Leuconostoc citreum (strain KM20).